The primary structure comprises 600 residues: MSTLTRFSVRPLATMTRHLADVASGRAEPDLVIKGARVLSTYSERILPDREVWISGGRIAAVKPAGSYRGSAATIYDAAGGLIAPGLVDPHIHIESSMVTACSYAEAALLNGTTTIFCDSHEIGNVMDVAGVEAMLEDARQAPSSIFLTVPSTVPATSPELETAGGDLTAEKIAALFDKWPEAVALGEKMDFVQVAMGDERSHAILAAALERGRPVSGHVYGREFVAAYAASGVTDTHEAIDREIADDLLEAGIWLFLRGGPPTTPWHSLPQAIKTITELGASHKRIAVCTDDRDADDLLLFGLDWVTREAMKAGMKPEQAWAMGSLHGATRFGLEGDIGGLGGGRRADLVLLDDGFKPVNTWYGGELVVENRKITPLLDTALSNRYRYPEAAYHTVKLPKAVKLTPELPTARVVAHTIRTELPGITLGHERITLEPSNHWQDHFDRHGLCFVAVVERHGKSAGNVAHGLLSNFNLKRGAVASSVGHDSHNIIVAGTNEADMQVALRAIEEAQGGVCVVMDGKVTAMVPLPIAGLLSDKRVTEVAEEVKALKVEWEKAGCSIPYMGFNLIPLSVIPEIRITDKGLVLVPEMEIVQLFEAA.

The protein belongs to the metallo-dependent hydrolases superfamily. Adenine deaminase family. Mn(2+) is required as a cofactor.

It carries out the reaction adenine + H2O + H(+) = hypoxanthine + NH4(+). The protein is Adenine deaminase of Chelativorans sp. (strain BNC1).